The sequence spans 162 residues: uncharacterized protein (162 aa).

The stretch at 129–161 (DLNAVLKNLKEVEKKSLKISKEELKKKLDQILG) forms a coiled coil.

This is an uncharacterized protein from Aquifex aeolicus (strain VF5).